The following is a 368-amino-acid chain: UDP-N-acetylglucosamine--N-acetylmuramyl-(pentapeptide) pyrophosphoryl-undecaprenol N-acetylglucosamine transferase (368 aa).

UDP-N-acetyl-alpha-D-glucosamine is bound by residues threonine 10–glycine 12, asparagine 126, serine 200, isoleucine 255, and glutamine 300.

It belongs to the glycosyltransferase 28 family. MurG subfamily.

Its subcellular location is the cell membrane. It carries out the reaction Mur2Ac(oyl-L-Ala-gamma-D-Glu-L-Lys-D-Ala-D-Ala)-di-trans,octa-cis-undecaprenyl diphosphate + UDP-N-acetyl-alpha-D-glucosamine = beta-D-GlcNAc-(1-&gt;4)-Mur2Ac(oyl-L-Ala-gamma-D-Glu-L-Lys-D-Ala-D-Ala)-di-trans,octa-cis-undecaprenyl diphosphate + UDP + H(+). It functions in the pathway cell wall biogenesis; peptidoglycan biosynthesis. Cell wall formation. Catalyzes the transfer of a GlcNAc subunit on undecaprenyl-pyrophosphoryl-MurNAc-pentapeptide (lipid intermediate I) to form undecaprenyl-pyrophosphoryl-MurNAc-(pentapeptide)GlcNAc (lipid intermediate II). The polypeptide is UDP-N-acetylglucosamine--N-acetylmuramyl-(pentapeptide) pyrophosphoryl-undecaprenol N-acetylglucosamine transferase (Lactobacillus helveticus (strain DPC 4571)).